The chain runs to 664 residues: DNA ligase (664 aa).

Residues 32–36 (DKDYD) and 80–81 (SL) each bind NAD(+). Lys122 serves as the catalytic N6-AMP-lysine intermediate. Residues Arg144, Glu178, and Lys314 each contribute to the NAD(+) site. Positions 407, 410, 423, and 429 each coordinate Zn(2+). One can recognise a BRCT domain in the interval 587-664 (IKENIFNGKT…SEEDFKNMIG (78 aa)).

The protein belongs to the NAD-dependent DNA ligase family. LigA subfamily. Mg(2+) serves as cofactor. The cofactor is Mn(2+).

The catalysed reaction is NAD(+) + (deoxyribonucleotide)n-3'-hydroxyl + 5'-phospho-(deoxyribonucleotide)m = (deoxyribonucleotide)n+m + AMP + beta-nicotinamide D-nucleotide.. Its function is as follows. DNA ligase that catalyzes the formation of phosphodiester linkages between 5'-phosphoryl and 3'-hydroxyl groups in double-stranded DNA using NAD as a coenzyme and as the energy source for the reaction. It is essential for DNA replication and repair of damaged DNA. In Clostridium novyi (strain NT), this protein is DNA ligase.